A 211-amino-acid polypeptide reads, in one-letter code: Proteasome subunit beta (211 aa).

Residues 1 to 8 constitute a propeptide, removed in mature form; by autocatalysis; the sequence is MNQTLETG. Residue Thr-9 is the Nucleophile of the active site.

This sequence belongs to the peptidase T1B family. As to quaternary structure, the 20S proteasome core is composed of 14 alpha and 14 beta subunits that assemble into four stacked heptameric rings, resulting in a barrel-shaped structure. The two inner rings, each composed of seven catalytic beta subunits, are sandwiched by two outer rings, each composed of seven alpha subunits. The catalytic chamber with the active sites is on the inside of the barrel. Has a gated structure, the ends of the cylinder being occluded by the N-termini of the alpha-subunits. Is capped at one or both ends by the proteasome regulatory ATPase, PAN.

The protein localises to the cytoplasm. It carries out the reaction Cleavage of peptide bonds with very broad specificity.. With respect to regulation, the formation of the proteasomal ATPase PAN-20S proteasome complex, via the docking of the C-termini of PAN into the intersubunit pockets in the alpha-rings, triggers opening of the gate for substrate entry. Interconversion between the open-gate and close-gate conformations leads to a dynamic regulation of the 20S proteasome proteolysis activity. Component of the proteasome core, a large protease complex with broad specificity involved in protein degradation. The T.acidophilum proteasome is able to cleave oligopeptides after Tyr, Leu, Phe, and to a lesser extent after Glu and Arg. Thus, displays chymotrypsin-like activity and low level of caspase-like and trypsin-like activities. The chain is Proteasome subunit beta from Thermoplasma acidophilum (strain ATCC 25905 / DSM 1728 / JCM 9062 / NBRC 15155 / AMRC-C165).